Here is a 378-residue protein sequence, read N- to C-terminus: MKYASFLALVGFITSTSAIGVSGAAEGFAKGVTGGGSATPVYPSTTAELVSYLTDSQPRVIVLTKTFDFTNTEGSTTATGCAPWGTAPGCQLAINQNDWCKNYQSSAPSVSVTYDNAGVLGMTVASDKTLLGSGSSGVIKGKGLRVVSGAKNIIIQNVAITDINPKYVWGGDAITIDNADMVWIDHVTTARIGRQHLVLGTSASNRVTISNSYFNGVSSYSATCDGYHYWGIYLTGSNDLVTMKGNYIHHFSGRSPKIQGNTLLHAVNNYWYDSTGHAFEIGSGGYVLAEGNVFQNIKTIVEPPVGGQLFTSPNSNTNQACSAYLGHVCQVNGFGSSGPFSQADTGLLSKFSGKNVASASAYTVAQSRVPSSAGQGKL.

The first 18 residues, 1–18 (MKYASFLALVGFITSTSA), serve as a signal peptide directing secretion. 2 disulfides stabilise this stretch: Cys-81–Cys-100 and Cys-90–Cys-224. Residue Arg-254 is part of the active site. A disulfide bridge links Cys-321 with Cys-329.

Belongs to the polysaccharide lyase 1 family.

Its subcellular location is the secreted. The enzyme catalyses Eliminative cleavage of (1-&gt;4)-alpha-D-galacturonan methyl ester to give oligosaccharides with 4-deoxy-6-O-methyl-alpha-D-galact-4-enuronosyl groups at their non-reducing ends.. Functionally, pectinolytic enzymes consist of four classes of enzymes: pectin lyase, polygalacturonase, pectin methylesterase and rhamnogalacturonase. Among pectinolytic enzymes, pectin lyase is the most important in depolymerization of pectin, since it cleaves internal glycosidic bonds of highly methylated pectins. This chain is Probable pectin lyase A (pelA), found in Aspergillus clavatus (strain ATCC 1007 / CBS 513.65 / DSM 816 / NCTC 3887 / NRRL 1 / QM 1276 / 107).